Consider the following 343-residue polypeptide: 4-hydroxy-2-oxovalerate aldolase (343 aa).

Positions 5–256 (ILLCDPTLRD…ETGIDLYKIL (252 aa)) constitute a Pyruvate carboxyltransferase domain. Substrate is bound at residue 13-14 (RD). Aspartate 14 serves as a coordination point for Mn(2+). Histidine 17 (proton acceptor) is an active-site residue. Residues serine 168 and histidine 195 each coordinate substrate. Residues histidine 195 and histidine 197 each contribute to the Mn(2+) site.

It belongs to the 4-hydroxy-2-oxovalerate aldolase family. In terms of assembly, interacts with MhpF.

The enzyme catalyses (S)-4-hydroxy-2-oxopentanoate = acetaldehyde + pyruvate. Its pathway is aromatic compound metabolism; 3-phenylpropanoate degradation. Its function is as follows. Catalyzes the retro-aldol cleavage of 4-hydroxy-2-oxopentanoate to pyruvate and acetaldehyde. Is involved in the meta-cleavage pathway for the degradation of aromatic compounds. This Pectobacterium atrosepticum (strain SCRI 1043 / ATCC BAA-672) (Erwinia carotovora subsp. atroseptica) protein is 4-hydroxy-2-oxovalerate aldolase.